A 137-amino-acid polypeptide reads, in one-letter code: Large ribosomal subunit protein uL16c (137 aa).

This sequence belongs to the universal ribosomal protein uL16 family. Part of the 50S ribosomal subunit.

The protein localises to the plastid. It localises to the chloroplast. The chain is Large ribosomal subunit protein uL16c from Thalassiosira pseudonana (Marine diatom).